The following is a 128-amino-acid chain: Large ribosomal subunit protein bL17 (128 aa).

It belongs to the bacterial ribosomal protein bL17 family. In terms of assembly, part of the 50S ribosomal subunit. Contacts protein L32.

The protein is Large ribosomal subunit protein bL17 of Streptococcus equi subsp. equi (strain 4047).